The following is a 187-amino-acid chain: UPF0301 protein YqgE (187 aa).

It belongs to the UPF0301 (AlgH) family.

The sequence is that of UPF0301 protein YqgE from Salmonella paratyphi B (strain ATCC BAA-1250 / SPB7).